Consider the following 195-residue polypeptide: Endoribonuclease YbeY (195 aa).

Zn(2+) is bound by residues His152, His156, and His162.

It belongs to the endoribonuclease YbeY family. Zn(2+) is required as a cofactor.

The protein localises to the cytoplasm. Functionally, single strand-specific metallo-endoribonuclease involved in late-stage 70S ribosome quality control and in maturation of the 3' terminus of the 16S rRNA. The polypeptide is Endoribonuclease YbeY (Rhodopseudomonas palustris (strain HaA2)).